The following is a 90-amino-acid chain: YcgL domain-containing protein Spro_2755 (90 aa).

Residues 1–85 form the YcgL domain; the sequence is MLCVIYRSSK…PLENLLKQHL (85 aa).

This chain is YcgL domain-containing protein Spro_2755, found in Serratia proteamaculans (strain 568).